We begin with the raw amino-acid sequence, 444 residues long: MKNIEKSEIIISLVDVDKEFGDKKVLDQINLDIKRGDFVTLLGPSGSGKTTILRLIGGFEWTTRGEIKFNGIDIKDVPAHKRDTATIFQDYALFPHLSVRGNIEFGLKLKRIKKKAEEIPDVVWKKFEHLKKKWQDKQKRKIKELKILQAHLEKLLENPQLDIKKRKKLQDKLDDSDFRYSNWENYLTSKSESFKKKYLTRKITKQEINKEITDIIDLVGLTGNENRAISELSGGMKQRVALARSLVIEPEIVLLDEPLSALDTKIRQKMQVFLKKIQQKLGLTFIFVTHDQDEALQLSDKIAIIRNGKIAQYDEPKQIYDYPVNKWVANFIGDSNFFQAKYIKKNQVEILGLKLYTIHDEFIPGQKLDCLIRPEDIDIDLNSGYFKGKVIQNIYKGSYYSLDIKVENTIINVETNDFYDLETQVFLKWDDDAIHLMEMENAEI.

The 322-residue stretch at 11-332 folds into the ABC transporter domain; the sequence is ISLVDVDKEF…PVNKWVANFI (322 aa). ATP is bound at residue 43–50; sequence GPSGSGKT. Positions 111–201 are insert; sequence RIKKKAEEIP…ESFKKKYLTR (91 aa).

This sequence belongs to the ABC transporter superfamily. Spermidine/putrescine importer (TC 3.A.1.11.1) family. In terms of assembly, the complex is composed of two ATP-binding proteins (PotA), two transmembrane proteins (PotB and PotC) and a solute-binding protein (PotD).

The protein resides in the cell membrane. It catalyses the reaction ATP + H2O + polyamine-[polyamine-binding protein]Side 1 = ADP + phosphate + polyamineSide 2 + [polyamine-binding protein]Side 1.. In terms of biological role, part of the ABC transporter complex PotABCD involved in spermidine/putrescine import. Responsible for energy coupling to the transport system. This chain is Spermidine/putrescine import ATP-binding protein PotA, found in Mesomycoplasma hyopneumoniae (strain J / ATCC 25934 / NCTC 10110) (Mycoplasma hyopneumoniae).